We begin with the raw amino-acid sequence, 254 residues long: (2Z,6E)-farnesyl diphosphate synthase (254 aa).

Aspartate 34 is a catalytic residue. Mg(2+) is bound at residue aspartate 34. Substrate contacts are provided by residues 35-38, tryptophan 39, histidine 52, and 80-82; these read GNRR and STD. Asparagine 83 acts as the Proton acceptor in catalysis. Residues arginine 86, arginine 203, and 209-211 contribute to the substrate site; that span reads RLS. Residue glutamate 222 participates in Mg(2+) binding.

It belongs to the UPP synthase family. Z-FPP synthase subfamily. In terms of assembly, homodimer. It depends on Mg(2+) as a cofactor.

It catalyses the reaction isopentenyl diphosphate + (2E)-geranyl diphosphate = (2Z,6E)-farnesyl diphosphate + diphosphate. Functionally, catalyzes the condensation of only one isopentenyl pyrophosphate (IPP) unit in the cis configuration to E-geranyl diphosphate (E-GPP) generating the 15 carbon product (2Z,6E)-farnesyl diphosphate (Z-FPP or EZ-FPP). Only geranyl diphosphate (GPP) can be used as isoprenyl acceptor. This chain is (2Z,6E)-farnesyl diphosphate synthase, found in Thermobifida fusca (strain YX).